Consider the following 104-residue polypeptide: Small ribosomal subunit protein uS10 (104 aa).

The protein belongs to the universal ribosomal protein uS10 family. Part of the 30S ribosomal subunit.

Involved in the binding of tRNA to the ribosomes. The sequence is that of Small ribosomal subunit protein uS10 from Gloeobacter violaceus (strain ATCC 29082 / PCC 7421).